We begin with the raw amino-acid sequence, 430 residues long: Protein IQ-DOMAIN 3 (430 aa).

The segment at 1–36 is disordered; the sequence is MGKSWFSAVKKALSPEPKQKKEQKPHKSKKWFGKSK. The short motif at 9 to 16 is the Nuclear localization signal 1 element; the sequence is VKKALSPE. Basic residues predominate over residues 23–35; it reads QKPHKSKKWFGKS. The region spanning 107–135 is the IQ domain; it reads EEIAAIKIQTAFRGYMARRALRALRGLVR. A coiled-coil region spans residues 170-224; the sequence is RLRLSEDKQALTRQLQQKHNKDFDKTGENWNDSTLSREKVEANMLNKQVATMRRE. The tract at residues 213-231 is calmodulin-binding; the sequence is MLNKQVATMRREKALAYAF. Disordered regions lie at residues 271–368 and 385–430; these read ENHS…SQSV and SNLS…TNLA. The span at 286–295 shows a compositional bias: low complexity; it reads ARSVASRAMS. Positions 326-340 are enriched in polar residues; the sequence is SEDSNSIVSFQSEQP. The Nuclear localization signal 2 motif lies at 396–403; sequence AKKRLSFS.

The protein belongs to the IQD family. Binds to multiple calmodulin (CaM) in the presence of Ca(2+) and CaM-like proteins.

It is found in the nucleus. The protein resides in the nucleolus. The protein localises to the cytoplasm. It localises to the cytoskeleton. In terms of biological role, may be involved in cooperative interactions with calmodulins or calmodulin-like proteins. Recruits calmodulin proteins to microtubules, thus being a potential scaffold in cellular signaling and trafficking. May associate with nucleic acids and regulate gene expression at the transcriptional or post-transcriptional level. This Arabidopsis thaliana (Mouse-ear cress) protein is Protein IQ-DOMAIN 3.